Reading from the N-terminus, the 393-residue chain is Beta-ureidopropionase (393 aa).

The 273-residue stretch at 72–344 folds into the CN hydrolase domain; sequence VRVGLVQNRI…DGLLVTELNL (273 aa). Residue glutamate 119 is the Proton acceptor of the active site. Residue lysine 196 is the Proton donor of the active site. The active-site Nucleophile is the cysteine 233. Phosphoserine is present on serine 378.

This sequence belongs to the carbon-nitrogen hydrolase superfamily. BUP family. Homodimer, homotetramer, homooctamer; can also form higher homooligomers. Post-translationally, the N-terminus is blocked. As to expression, detected in liver (at protein level).

It localises to the cytoplasm. The enzyme catalyses 3-(carbamoylamino)propanoate + H2O + 2 H(+) = beta-alanine + NH4(+) + CO2. The catalysed reaction is 3-(carbamoylamino)-2-methylpropanoate + H2O + 2 H(+) = (R)-3-amino-2-methylpropanoate + NH4(+) + CO2. The protein operates within amino-acid biosynthesis; beta-alanine biosynthesis. With respect to regulation, allosteric enzyme with positive cooperativity toward the substrate N-carbamoyl-beta-alanine at low substrate concentrations (below 12 nM). Displays no cooperativity at substrate levels above 12 nM. In terms of biological role, catalyzes a late step in pyrimidine degradation. Converts N-carbamoyl-beta-alanine (3-ureidopropanoate) into beta-alanine, ammonia and carbon dioxide. Likewise, converts N-carbamoyl-beta-aminoisobutyrate (3-ureidoisobutyrate) into beta-aminoisobutyrate, ammonia and carbon dioxide. This is Beta-ureidopropionase (Upb1) from Rattus norvegicus (Rat).